The primary structure comprises 390 residues: Phosphoglycerate kinase (390 aa).

Residues 21 to 23, Arg-36, 59 to 62, Arg-114, and Arg-147 each bind substrate; these read DLN and HLGR. Residues Lys-198, Glu-314, and 340-343 each bind ATP; that span reads GGDT.

The protein belongs to the phosphoglycerate kinase family. Monomer.

The protein localises to the cytoplasm. It catalyses the reaction (2R)-3-phosphoglycerate + ATP = (2R)-3-phospho-glyceroyl phosphate + ADP. It participates in carbohydrate degradation; glycolysis; pyruvate from D-glyceraldehyde 3-phosphate: step 2/5. This chain is Phosphoglycerate kinase, found in Buchnera aphidicola subsp. Acyrthosiphon pisum (strain 5A).